The primary structure comprises 256 residues: 5-keto-4-deoxy-D-glucarate aldolase (256 aa).

The active-site Proton acceptor is H50. Q151 contacts substrate. E153 contributes to the Mg(2+) binding site. 2 residues coordinate substrate: S178 and D179. Mg(2+) is bound at residue D179.

It belongs to the HpcH/HpaI aldolase family. KDGluc aldolase subfamily. Homohexamer; trimer of dimers. Mg(2+) serves as cofactor.

The enzyme catalyses 5-dehydro-4-deoxy-D-glucarate = 2-hydroxy-3-oxopropanoate + pyruvate. It catalyses the reaction 2-dehydro-3-deoxy-D-glucarate = 2-hydroxy-3-oxopropanoate + pyruvate. Its pathway is carbohydrate acid metabolism; galactarate degradation; D-glycerate from galactarate: step 2/3. Functionally, catalyzes the reversible retro-aldol cleavage of both 5-keto-4-deoxy-D-glucarate and 2-keto-3-deoxy-D-glucarate to pyruvate and tartronic semialdehyde. The sequence is that of 5-keto-4-deoxy-D-glucarate aldolase from Escherichia coli O6:H1 (strain CFT073 / ATCC 700928 / UPEC).